A 500-amino-acid polypeptide reads, in one-letter code: Probable cytosol aminopeptidase (500 aa).

The Mn(2+) site is built by Lys268 and Asp273. Lys280 is an active-site residue. Residues Asp291, Asp350, and Glu352 each coordinate Mn(2+). Arg354 is an active-site residue.

Belongs to the peptidase M17 family. The cofactor is Mn(2+).

It is found in the cytoplasm. The catalysed reaction is Release of an N-terminal amino acid, Xaa-|-Yaa-, in which Xaa is preferably Leu, but may be other amino acids including Pro although not Arg or Lys, and Yaa may be Pro. Amino acid amides and methyl esters are also readily hydrolyzed, but rates on arylamides are exceedingly low.. The enzyme catalyses Release of an N-terminal amino acid, preferentially leucine, but not glutamic or aspartic acids.. Functionally, presumably involved in the processing and regular turnover of intracellular proteins. Catalyzes the removal of unsubstituted N-terminal amino acids from various peptides. This Baumannia cicadellinicola subsp. Homalodisca coagulata protein is Probable cytosol aminopeptidase.